The sequence spans 1215 residues: Zinc finger E-box-binding homeobox 2 (1215 aa).

A disordered region spans residues 1–111; the sequence is MKQPIMADGP…ILQASVAGPE (111 aa). Over residues 12–24 the composition is skewed to basic residues; sequence CKRRKQANPRRKN. Over residues 57–74 the composition is skewed to polar residues; that stretch reads DQDTSPASMPNHESSPHM. Residues 89-98 show a composition bias toward basic and acidic residues; the sequence is RESVVEHSWH. A Phosphoserine modification is found at serine 142. C2H2-type zinc fingers lie at residues 211–234, 241–263, and 282–304; these read LTCP…KYRH, FSCP…MVTH, and FKCT…LRIH. Residues 310–334 form a C2H2-type 4; atypical zinc finger; it reads YECPNCKKRFSHSGSYSSHISSKKC. 3 positions are modified to phosphoserine: serine 356, serine 360, and serine 364. At lysine 377 the chain carries N6-acetyllysine. Residue lysine 391 forms a Glycyl lysine isopeptide (Lys-Gly) (interchain with G-Cter in SUMO); alternate linkage. Lysine 391 is covalently cross-linked (Glycyl lysine isopeptide (Lys-Gly) (interchain with G-Cter in SUMO2); alternate). Residues 437 to 487 form an SMAD-MH2 binding domain region; sequence QHLGVGMEAPLLGFPTMNSNLSEVQKVLQIVDNTVSRQKMDCKTEDISKLK. Residues lysine 479 and lysine 555 each participate in a glycyl lysine isopeptide (Lys-Gly) (interchain with G-Cter in SUMO2) cross-link. The C2H2-type 5; degenerate zinc finger occupies 581–605; sequence FSCQFCKESFPGPIPLHQHERYLCK. Residues lysine 611 and lysine 632 each participate in a glycyl lysine isopeptide (Lys-Gly) (interchain with G-Cter in SUMO2) cross-link. Residues 644-703 constitute a DNA-binding region (homeobox; atypical); that stretch reads GLTSPINPYKDHMSVLKAYYAMNMEPNSDELLKISIAVGLPQEFVKEWFEQRKVYQYSNS. Serine 647 carries the post-translational modification Phosphoserine. 2 disordered regions span residues 702–740 and 772–811; these read NSRS…DSIT and VDKL…SEEL. Lysine 713 participates in a covalent cross-link: Glycyl lysine isopeptide (Lys-Gly) (interchain with G-Cter in SUMO2). 2 positions are modified to phosphoserine: serine 731 and serine 780. Positions 780–808 are enriched in low complexity; it reads SNTPSPLNLSSTSSKNSHSSSYTPNSFSS. Threonine 782 is modified (phosphothreonine). Residue serine 784 is modified to Phosphoserine. Lysine 866 is covalently cross-linked (Glycyl lysine isopeptide (Lys-Gly) (interchain with G-Cter in SUMO); alternate). Lysine 866 is covalently cross-linked (Glycyl lysine isopeptide (Lys-Gly) (interchain with G-Cter in SUMO2); alternate). C2H2-type zinc fingers lie at residues 999–1021 and 1027–1049; these read YACD…KYEH and HQCQ…SRLH. Residues 1055–1076 form a C2H2-type 8; atypical zinc finger; the sequence is YQCDKCGKRFSHSGSYSQHMNH. The interval 1117–1215 is disordered; the sequence is TPQGYSDSEE…EEDNMEDGME (99 aa). A phosphoserine mark is found at serine 1122 and serine 1124. The span at 1127–1149 shows a compositional bias: basic and acidic residues; sequence RESMPRDGESEKEHEKEGEEGYG. Acidic residues predominate over residues 1157–1167; the sequence is DEEEEEEEEES. Basic and acidic residues-rich tracts occupy residues 1168-1179 and 1186-1205; these read ENKSMDTDPETI and GDHS…KSDH. Serine 1203 carries the phosphoserine modification. Acidic residues predominate over residues 1206-1215; the sequence is EEDNMEDGME.

The protein belongs to the delta-EF1/ZFH-1 C2H2-type zinc-finger family. As to quaternary structure, interacts with CBX4 and CTBP1. Binds activated SMAD1, activated SMAD2 and activated SMAD3; binding with SMAD4 is not detected. Post-translationally, sumoylation on Lys-391 and Lys-866 is promoted by the E3 SUMO-protein ligase CBX4, and impairs interaction with CTBP1 and transcription repression activity.

The protein resides in the nucleus. It localises to the chromosome. Its function is as follows. Transcriptional inhibitor that binds to DNA sequence 5'-CACCT-3' in different promoters. Represses transcription of E-cadherin. Represses expression of MEOX2. This is Zinc finger E-box-binding homeobox 2 (Zeb2) from Mus musculus (Mouse).